The sequence spans 163 residues: Xanthine-guanine phosphoribosyltransferase (163 aa).

5-phospho-alpha-D-ribose 1-diphosphate-binding positions include 43-44 (RG) and 95-103 (DDLVDTGGT). A Mg(2+)-binding site is contributed by aspartate 96. Positions 99 and 142 each coordinate guanine. Xanthine is bound by residues aspartate 99 and isoleucine 142. GMP-binding positions include 99 to 103 (DTGGT) and 141 to 142 (WI).

Belongs to the purine/pyrimidine phosphoribosyltransferase family. XGPT subfamily. Homotetramer. Mg(2+) is required as a cofactor.

Its subcellular location is the cell inner membrane. It catalyses the reaction GMP + diphosphate = guanine + 5-phospho-alpha-D-ribose 1-diphosphate. The catalysed reaction is XMP + diphosphate = xanthine + 5-phospho-alpha-D-ribose 1-diphosphate. The enzyme catalyses IMP + diphosphate = hypoxanthine + 5-phospho-alpha-D-ribose 1-diphosphate. The protein operates within purine metabolism; GMP biosynthesis via salvage pathway; GMP from guanine: step 1/1. It participates in purine metabolism; XMP biosynthesis via salvage pathway; XMP from xanthine: step 1/1. In terms of biological role, purine salvage pathway enzyme that catalyzes the transfer of the ribosyl-5-phosphate group from 5-phospho-alpha-D-ribose 1-diphosphate (PRPP) to the N9 position of the 6-oxopurines guanine and xanthine to form the corresponding ribonucleotides GMP (guanosine 5'-monophosphate) and XMP (xanthosine 5'-monophosphate), with the release of PPi. To a lesser extent, also acts on hypoxanthine. The protein is Xanthine-guanine phosphoribosyltransferase of Nitratidesulfovibrio vulgaris (strain DP4) (Desulfovibrio vulgaris).